Here is a 350-residue protein sequence, read N- to C-terminus: Protein RecA (350 aa).

Position 80-87 (80-87) interacts with ATP; it reads GPESSGKT.

The protein belongs to the RecA family.

The protein localises to the cytoplasm. Can catalyze the hydrolysis of ATP in the presence of single-stranded DNA, the ATP-dependent uptake of single-stranded DNA by duplex DNA, and the ATP-dependent hybridization of homologous single-stranded DNAs. It interacts with LexA causing its activation and leading to its autocatalytic cleavage. In Chlorobium limicola (strain DSM 245 / NBRC 103803 / 6330), this protein is Protein RecA.